The chain runs to 522 residues: MEELQGYFEKDRSRQQPFLYPLLFQEYIYALAHGRGLNGNSSIFYEPRKVFGYDSKSSLALVKRLITRIYQQNSFLSPVNDSNQNRFVGHHHNNLFYSSFYSQMISEGFAIIVEIPFSLQLVSHFKEKEIPKFHNLRSIHSIFPFLEDKFLHFNYVSDILIPHPIHMEILVQILQCWIQDVPLLHFLGFFLHEYHNWNSFLITKNKSSYSFSKENKRLFRLVYNSYVSECEFVFVFLRKHSSYLRFISFRTFLERRYFYGKMEHRQTEHLIVVYCDYFNGTLWFFKDPFMHYVRCQGKAILSSKGTHLLMKKWKYHFVNFWQYNFHFWYQSYRIHINQLSNCSFYFLGYLSSLLKKSSTVRNQMLENSFLIDTIITKFDTAVPVIFLIGALSKAPFCTVSGHPISKPIWTDLSDSYIIERFGRICRNLSHYHSGSSKKHGLYRIKYILRLSCARTLARKHKSTVRTFMQKLGSGLVEEFFIEGEQGLSLILPKAIPFIFQGSHRERIWYLDIIRINDLVNHS.

It belongs to the intron maturase 2 family. MatK subfamily.

It is found in the plastid. Its subcellular location is the chloroplast. Its function is as follows. Usually encoded in the trnK tRNA gene intron. Probably assists in splicing its own and other chloroplast group II introns. The chain is Maturase K from Aristea glauca.